Here is a 500-residue protein sequence, read N- to C-terminus: Beta-glucosidase 28 (500 aa).

The signal sequence occupies residues 1 to 24 (MDRRLLLSALLFIALACSSNRVHG). Q45 lines the a beta-D-glucoside pocket. Residue N111 is glycosylated (N-linked (GlcNAc...) asparagine). A beta-D-glucoside is bound by residues H146 and 191-192 (NE). Catalysis depends on E192, which acts as the Proton donor. Cysteines 211 and 219 form a disulfide. A beta-D-glucoside is bound at residue Y337. The N-linked (GlcNAc...) asparagine glycan is linked to N362. E408 is a binding site for a beta-D-glucoside. The active-site Nucleophile is E408. 3 N-linked (GlcNAc...) asparagine glycosylation sites follow: N409, N415, and N416. A beta-D-glucoside-binding positions include W457, 464 to 465 (EF), and F473.

It belongs to the glycosyl hydrolase 1 family.

The enzyme catalyses Hydrolysis of terminal, non-reducing beta-D-glucosyl residues with release of beta-D-glucose.. The polypeptide is Beta-glucosidase 28 (BGLU28) (Oryza sativa subsp. japonica (Rice)).